Consider the following 60-residue polypeptide: DNA-directed RNA polymerase subunit Rpo6 (60 aa).

This sequence belongs to the archaeal Rpo6/eukaryotic RPB6 RNA polymerase subunit family. Part of the RNA polymerase complex.

The protein resides in the cytoplasm. It carries out the reaction RNA(n) + a ribonucleoside 5'-triphosphate = RNA(n+1) + diphosphate. Its function is as follows. DNA-dependent RNA polymerase (RNAP) catalyzes the transcription of DNA into RNA using the four ribonucleoside triphosphates as substrates. The polypeptide is DNA-directed RNA polymerase subunit Rpo6 (Methanothrix thermoacetophila (strain DSM 6194 / JCM 14653 / NBRC 101360 / PT) (Methanosaeta thermophila)).